A 672-amino-acid chain; its full sequence is Protein seu-1 (672 aa).

2 disordered regions span residues 1–463 (MSSI…AGTE) and 576–672 (LAPP…LKHL). The segment covering 8 to 20 (NDNRRPTFRDHRT) has biased composition (basic and acidic residues). Residues 25–34 (GRGGSGGGGR) are compositionally biased toward gly residues. Residues 62–85 (RSQDHRQRSPEVRRHRSPEKESKD) are compositionally biased toward basic and acidic residues. A compositionally biased stretch (low complexity) spans 87 to 105 (VVTSTGSSRGATSASVTSS). Basic and acidic residues-rich tracts occupy residues 107–138 (RRHE…DADR), 189–226 (VSRH…KSNG), 234–268 (RRRE…KVED), and 289–306 (EQAK…ESHQ). The span at 307-317 (SAHSAAVSNAS) shows a compositional bias: low complexity. Residues 322-343 (SEEELDYEEDDIDVDLDGDIDV) show a composition bias toward acidic residues. Basic and acidic residues-rich tracts occupy residues 366–375 (NDVKDETMEE), 382–396 (PEKK…DDKD), 410–424 (RRED…SDHH), 436–447 (RATDHKESRRSE), 607–626 (SFGD…RHMD), and 636–659 (DHRV…ERGF).

As to expression, highly expressed in intestinal cells, lateral hypodermal (seam) cells, Pn.p ventral hypodermal cells, and spermatheca. Expressed at low levels in the ventral nerve cord.

The protein resides in the nucleus. Its function is as follows. Together with unc-5, involved in touch neuron axon guidance. During gonad morphogenesis, plays a role in the unc-5-/unc-6-mediated migration of distal tip cells along the body. The sequence is that of Protein seu-1 from Caenorhabditis elegans.